A 136-amino-acid polypeptide reads, in one-letter code: Large ribosomal subunit protein uL16c (136 aa).

Belongs to the universal ribosomal protein uL16 family. In terms of assembly, part of the 50S ribosomal subunit.

The protein localises to the plastid. The protein resides in the chloroplast. This is Large ribosomal subunit protein uL16c from Mesostigma viride (Green alga).